We begin with the raw amino-acid sequence, 552 residues long: Dihydroxy-acid dehydratase (552 aa).

Asp-78 contacts Mg(2+). Residue Cys-119 participates in [2Fe-2S] cluster binding. Mg(2+)-binding residues include Asp-120 and Lys-121. Lys-121 bears the N6-carboxylysine mark. Cys-191 is a binding site for [2Fe-2S] cluster. Residue Glu-442 participates in Mg(2+) binding. Ser-468 (proton acceptor) is an active-site residue.

This sequence belongs to the IlvD/Edd family. As to quaternary structure, homodimer. The cofactor is [2Fe-2S] cluster. Mg(2+) is required as a cofactor.

The enzyme catalyses (2R)-2,3-dihydroxy-3-methylbutanoate = 3-methyl-2-oxobutanoate + H2O. It catalyses the reaction (2R,3R)-2,3-dihydroxy-3-methylpentanoate = (S)-3-methyl-2-oxopentanoate + H2O. It participates in amino-acid biosynthesis; L-isoleucine biosynthesis; L-isoleucine from 2-oxobutanoate: step 3/4. It functions in the pathway amino-acid biosynthesis; L-valine biosynthesis; L-valine from pyruvate: step 3/4. Its function is as follows. Functions in the biosynthesis of branched-chain amino acids. Catalyzes the dehydration of (2R,3R)-2,3-dihydroxy-3-methylpentanoate (2,3-dihydroxy-3-methylvalerate) into 2-oxo-3-methylpentanoate (2-oxo-3-methylvalerate) and of (2R)-2,3-dihydroxy-3-methylbutanoate (2,3-dihydroxyisovalerate) into 2-oxo-3-methylbutanoate (2-oxoisovalerate), the penultimate precursor to L-isoleucine and L-valine, respectively. The sequence is that of Dihydroxy-acid dehydratase from Caldicellulosiruptor bescii (strain ATCC BAA-1888 / DSM 6725 / KCTC 15123 / Z-1320) (Anaerocellum thermophilum).